We begin with the raw amino-acid sequence, 333 residues long: Gap junction alpha-4 protein (333 aa).

The Cytoplasmic segment spans residues 1 to 20 (MGDWGFLEKLLDQVQEHSTV). Residues 21 to 40 (VGKIWLTVLFIFRILILGLA) form a helical membrane-spanning segment. Over 41–76 (GESVWGDEQSDFECNTAQPGCTNVCYDQAFPISHIR) the chain is Extracellular. The helical transmembrane segment at 77–99 (YWVLQFLFVSTPTLIYLGHVIYL) threads the bilayer. Residues 100-148 (SRREERLRQKEGELRALPSKDPHVERALAAIEHQMAKISVAEDGRLRIR) lie on the Cytoplasmic side of the membrane. The chain crosses the membrane as a helical span at residues 149 to 171 (GALMGTYVISVLCKSVLEAGFLY). Residues 172-208 (GQWRLYGWTMEPVFVCQRAPCPHVVDCYVSRPTEKTI) lie on the Extracellular side of the membrane. Residues 209–231 (FIIFMLVVGVISLVLNLLELVHL) traverse the membrane as a helical segment. At 232-333 (LCRCVSREIK…NSSASKKQYV (102 aa)) the chain is on the cytoplasmic side. A disordered region spans residues 292-333 (ANLTTEERLTSTRPPPFVNAAPQGGQKSSSRPNSSASKKQYV). The span at 318 to 333 (KSSSRPNSSASKKQYV) shows a compositional bias: low complexity.

This sequence belongs to the connexin family. Alpha-type (group II) subfamily. In terms of assembly, a connexon is composed of a hexamer of connexins. As to expression, highly expressed in lung.

The protein localises to the cell membrane. The protein resides in the cell junction. It localises to the gap junction. Functionally, one gap junction consists of a cluster of closely packed pairs of transmembrane channels, the connexons, through which materials of low MW diffuse from one cell to a neighboring cell. This chain is Gap junction alpha-4 protein (Gja4), found in Rattus norvegicus (Rat).